The sequence spans 357 residues: tRNA N6-adenosine threonylcarbamoyltransferase (357 aa).

2 residues coordinate Fe cation: histidine 116 and histidine 120. Substrate is bound by residues 139-143, aspartate 172, glycine 185, and asparagine 284; that span reads LVSGG. Fe cation is bound at residue aspartate 312.

It belongs to the KAE1 / TsaD family. Fe(2+) is required as a cofactor.

The protein resides in the cytoplasm. The enzyme catalyses L-threonylcarbamoyladenylate + adenosine(37) in tRNA = N(6)-L-threonylcarbamoyladenosine(37) in tRNA + AMP + H(+). Its function is as follows. Required for the formation of a threonylcarbamoyl group on adenosine at position 37 (t(6)A37) in tRNAs that read codons beginning with adenine. Is involved in the transfer of the threonylcarbamoyl moiety of threonylcarbamoyl-AMP (TC-AMP) to the N6 group of A37, together with TsaE and TsaB. TsaD likely plays a direct catalytic role in this reaction. In Synechococcus sp. (strain CC9605), this protein is tRNA N6-adenosine threonylcarbamoyltransferase.